The chain runs to 692 residues: MGKVIGIDLGTTNSCASVLEGGKPIVITNTEGGRTTPSIVGFTKGSQRLVGQLAKRQSVTNAENTVYSIKRFIGRRWDDTVEERSRVPYNCVKGRDDTVSVSIRGQSYTPQEISAMILQKLKADSEAFLGEPVTQAVITVPAYFTDAQRQATKDAGTIAGLEVLRIINEPTAAALAYGLDKQETEELILVFDLGGGTFDVSLLQLGNGVFEVLSTSGNNHLGGDDFDNCVVQWMAESFKQKENIDLSTDKMAIQRLREAAEKAKIELSSMLNTTINLPFITADESGPKHLEMELARSQFEELTKQLLEDTRVPLTQALDDGEIRASDVHRVILVGGSTRIPAIQRVIQEFFPDSQLERSVNPDEAVALGAAIQAGVIGGEVEDVLLLDVTPLSLGLETLGEVTTKIIERNTTIPTSRSEVFSTAVDGQTSVEIHVIQGERAMARDNKSLGKFLLAGIPPAPRGMPQIEVSFEIDVNGILKVSAQDQGTGKEQSIVISHTGGLSGGEIEKMRQEAQQYAAQDQLRLRMMELQNQADSLFHTYETTLQESGELVREELKSSGKQKKDQLAIALRTPNTPVEKLQTLVEEFRQIILLIGTEVYQQGKGAASNEFANFVQGTSSGTSQMIESLETNLNPIQASSGITMTPGTMINGTVNPGGMDYVETAPVYGLDDGEEFDFDADETVYSDYEAID.

Thr197 carries the phosphothreonine; by autocatalysis modification.

Belongs to the heat shock protein 70 family.

Its function is as follows. Acts as a chaperone. The sequence is that of Chaperone protein dnaK1 (dnaK1) from Synechocystis sp. (strain ATCC 27184 / PCC 6803 / Kazusa).